A 343-amino-acid chain; its full sequence is Replication initiation protein (343 aa).

Residues Glu42–Asn61 form a disordered region.

Functionally, probably functions as an initiator for the IncI1 ColIb-P9 replicon. The polypeptide is Replication initiation protein (repZ) (Escherichia coli).